The sequence spans 123 residues: Protein Rev (123 aa).

Phosphoserine; by host CK2 occurs at positions 5 and 8. The homomultimerization stretch occupies residues 18–26; it reads IIKILYQSN. Disordered regions lie at residues 24–49 and 82–123; these read QSNP…RARQ and TLDS…GAKN. The Nuclear localization signal and RNA-binding (RRE) signature appears at 34 to 50; that stretch reads SRQARRNRRRRWRARQR. Residues 36-49 show a composition bias toward basic residues; it reads QARRNRRRRWRARQ. A Nuclear export signal and binding to XPO1 motif is present at residues 73–84; that stretch reads LPLPPIERLTLD. Residues 97–112 show a composition bias toward polar residues; the sequence is PQGTETGTGSPNTPEG.

The protein belongs to the HIV-1 REV protein family. As to quaternary structure, homomultimer; when bound to the RRE. Multimeric assembly is essential for activity and may involve XPO1. Binds to human KPNB1, XPO1, TNPO1, RANBP5 and IPO7. Interacts with the viral Integrase. Interacts with human KHDRBS1. Interacts with human NAP1; this interaction decreases Rev multimerization and stimulates its activity. Interacts with human DEAD-box helicases DDX3 and DDX24; these interactions may serve for viral RNA export to the cytoplasm and packaging, respectively. Interacts with human PSIP1; this interaction may inhibit HIV-1 DNA integration by promoting dissociation of the Integrase-LEDGF/p75 complex. Asymmetrically arginine dimethylated at one site by host PRMT6. Methylation impairs the RNA-binding activity and export of viral RNA from the nucleus to the cytoplasm. In terms of processing, phosphorylated by protein kinase CK2. Presence of, and maybe binding to the N-terminus of the regulatory beta subunit of CK2 is necessary for CK2-mediated Rev's phosphorylation.

Its subcellular location is the host nucleus. The protein resides in the host nucleolus. It localises to the host cytoplasm. Escorts unspliced or incompletely spliced viral pre-mRNAs (late transcripts) out of the nucleus of infected cells. These pre-mRNAs carry a recognition sequence called Rev responsive element (RRE) located in the env gene, that is not present in fully spliced viral mRNAs (early transcripts). This function is essential since most viral proteins are translated from unspliced or partially spliced pre-mRNAs which cannot exit the nucleus by the pathway used by fully processed cellular mRNAs. Rev itself is translated from a fully spliced mRNA that readily exits the nucleus. Rev's nuclear localization signal (NLS) binds directly to KPNB1/Importin beta-1 without previous binding to KPNA1/Importin alpha-1. KPNB1 binds to the GDP bound form of RAN (Ran-GDP) and targets Rev to the nucleus. In the nucleus, the conversion from Ran-GDP to Ran-GTP dissociates Rev from KPNB1 and allows Rev's binding to the RRE in viral pre-mRNAs. Rev multimerization on the RRE via cooperative assembly exposes its nuclear export signal (NES) to the surface. Rev can then form a complex with XPO1/CRM1 and Ran-GTP, leading to nuclear export of the complex. Conversion from Ran-GTP to Ran-GDP mediates dissociation of the Rev/RRE/XPO1/RAN complex, so that Rev can return to the nucleus for a subsequent round of export. Beside KPNB1, also seems to interact with TNPO1/Transportin-1, RANBP5/IPO5 and IPO7/RANBP7 for nuclear import. The nucleoporin-like HRB/RIP is an essential cofactor that probably indirectly interacts with Rev to release HIV RNAs from the perinuclear region to the cytoplasm. This Simian immunodeficiency virus (isolate MB66) (SIV-cpz) protein is Protein Rev.